A 236-amino-acid chain; its full sequence is Phosphoribosylformylglycinamidine synthase subunit PurQ (236 aa).

The 233-residue stretch at 2–234 (RFAVVTFPGS…LSVGLEVAHS (233 aa)) folds into the Glutamine amidotransferase type-1 domain. The active-site Nucleophile is the Cys-86. Active-site residues include His-203 and Glu-205.

Part of the FGAM synthase complex composed of 1 PurL, 1 PurQ and 2 PurS subunits.

The protein localises to the cytoplasm. The enzyme catalyses N(2)-formyl-N(1)-(5-phospho-beta-D-ribosyl)glycinamide + L-glutamine + ATP + H2O = 2-formamido-N(1)-(5-O-phospho-beta-D-ribosyl)acetamidine + L-glutamate + ADP + phosphate + H(+). The catalysed reaction is L-glutamine + H2O = L-glutamate + NH4(+). It functions in the pathway purine metabolism; IMP biosynthesis via de novo pathway; 5-amino-1-(5-phospho-D-ribosyl)imidazole from N(2)-formyl-N(1)-(5-phospho-D-ribosyl)glycinamide: step 1/2. In terms of biological role, part of the phosphoribosylformylglycinamidine synthase complex involved in the purines biosynthetic pathway. Catalyzes the ATP-dependent conversion of formylglycinamide ribonucleotide (FGAR) and glutamine to yield formylglycinamidine ribonucleotide (FGAM) and glutamate. The FGAM synthase complex is composed of three subunits. PurQ produces an ammonia molecule by converting glutamine to glutamate. PurL transfers the ammonia molecule to FGAR to form FGAM in an ATP-dependent manner. PurS interacts with PurQ and PurL and is thought to assist in the transfer of the ammonia molecule from PurQ to PurL. In Thermomicrobium roseum (strain ATCC 27502 / DSM 5159 / P-2), this protein is Phosphoribosylformylglycinamidine synthase subunit PurQ.